The chain runs to 425 residues: Enolase (425 aa).

(2R)-2-phosphoglycerate is bound at residue Gln-163. Glu-205 acts as the Proton donor in catalysis. The Mg(2+) site is built by Asp-242, Glu-285, and Asp-312. The (2R)-2-phosphoglycerate site is built by Lys-337, Arg-366, Ser-367, and Lys-388. Residue Lys-337 is the Proton acceptor of the active site.

It belongs to the enolase family. Mg(2+) is required as a cofactor.

It localises to the cytoplasm. The protein localises to the secreted. It is found in the cell surface. The catalysed reaction is (2R)-2-phosphoglycerate = phosphoenolpyruvate + H2O. The protein operates within carbohydrate degradation; glycolysis; pyruvate from D-glyceraldehyde 3-phosphate: step 4/5. Its function is as follows. Catalyzes the reversible conversion of 2-phosphoglycerate (2-PG) into phosphoenolpyruvate (PEP). It is essential for the degradation of carbohydrates via glycolysis. The protein is Enolase of Cereibacter sphaeroides (strain ATCC 17025 / ATH 2.4.3) (Rhodobacter sphaeroides).